Here is a 471-residue protein sequence, read N- to C-terminus: MGLPTVPGLLLPLVLPALLADVYPAGVQGLVPHPGDLEKRESPCPQGKYNHPQNSTICCTKCHKGTYLYNDCPGPGRDTDCRVCAPGTYTALENHLRRCLSCSRCRDEMFQVEISPCVVDRDTVCGCRKNQYREYWGETGFRCLNCSLCPNGTVNIPCQERQDTICHCHMGFFLKGAKCISCHDCKNKECEKLCPTRPSTGKDSQDPGTTVLLPLVIVFGLCLASFASVVLACRYQRWKPKLYSIICGQSTLVKEGEPELLVPAPGFNPTTTICFSSTPSSSPVSIPPYISCDRSNFGAVASPSSETAPPHLKAGPILPGPPASTHLCTPGPPASTHLCTPGPPASTHLCTPVQKWEASAPSAPDQLADADPATLYAVVDGVPPSRWKELVRRLGLSEHEIERLELENGRHLREAQYSMLAAWRRRTPRREATLELLGRVLRDMDLLGCLENIEEALGGAARLASEPRLLW.

The signal sequence occupies residues 1 to 29 (MGLPTVPGLLLPLVLPALLADVYPAGVQG). Over 30–210 (LVPHPGDLEK…GKDSQDPGTT (181 aa)) the chain is Extracellular. 4 TNFR-Cys repeats span residues 43–82 (PCPQGKYNHPQNSTICCTKCHKGTYLYNDCPGPGRDTDCR), 83–125 (VCAP…DTVC), 126–166 (GCRK…DTIC), and 167–195 (HCHMGFFLKGAKCISCHDCKNKECEKLCP). 7 disulfide bridges follow: cysteine 44-cysteine 58, cysteine 59-cysteine 72, cysteine 62-cysteine 81, cysteine 84-cysteine 99, cysteine 102-cysteine 117, cysteine 105-cysteine 125, and cysteine 127-cysteine 143. Asparagine 54 carries an N-linked (GlcNAc...) asparagine glycan. N-linked (GlcNAc...) asparagine glycans are attached at residues asparagine 145 and asparagine 151. Cystine bridges form between cysteine 146/cysteine 158, cysteine 149/cysteine 166, cysteine 168/cysteine 179, cysteine 182/cysteine 194, and cysteine 185/cysteine 190. A helical membrane pass occupies residues 211–233 (VLLPLVIVFGLCLASFASVVLAC). The Cytoplasmic segment spans residues 234-471 (RYQRWKPKLY…RLASEPRLLW (238 aa)). An N-SMase activation domain (NSD) region spans residues 340–360 (TPGPPASTHLCTPVQKWEASA). The region spanning 372 to 457 (PATLYAVVDG…GCLENIEEAL (86 aa)) is the Death domain.

As to quaternary structure, binding of TNF to the extracellular domain leads to homotrimerization. The aggregated death domains provide a novel molecular interface that interacts specifically with the death domain of TRADD. Various TRADD-interacting proteins such as TRAFS, RIPK1 and possibly FADD, are recruited to the complex by their association with TRADD. This complex activates at least two distinct signaling cascades, apoptosis and NF-kappa-B signaling. Interacts with BAG4, BABAM2, FEM1B, GRB2, SQSTM1 and TRPC4AP. Interacts directly with NOL3 (via CARD domain); inhibits TNF-signaling pathway. Interacts with SH3RF2, TRADD and RIPK1. SH3RF2 facilitates the recruitment of RIPK1 and TRADD to TNFRSF1A in a TNF-alpha-dependent process. Interacts with PGLYRP1; this interaction is important for cell death induction. Interacts (via death domain) with MADD (via death domain).

The protein localises to the cell membrane. It localises to the golgi apparatus membrane. In terms of biological role, receptor for TNFSF2/TNF-alpha and homotrimeric TNFSF1/lymphotoxin-alpha. The adapter molecule FADD recruits caspase-8 to the activated receptor. The resulting death-inducing signaling complex (DISC) performs caspase-8 proteolytic activation which initiates the subsequent cascade of caspases (aspartate-specific cysteine proteases) mediating apoptosis. This is Tumor necrosis factor receptor superfamily member 1A (TNFRSF1A) from Bos taurus (Bovine).